A 79-amino-acid chain; its full sequence is Acyl carrier protein (79 aa).

In terms of domain architecture, Carrier spans 2–77 (SNIEERVKKI…QAIDYINAHA (76 aa)). Ser37 is subject to O-(pantetheine 4'-phosphoryl)serine.

Belongs to the acyl carrier protein (ACP) family. In terms of processing, 4'-phosphopantetheine is transferred from CoA to a specific serine of apo-ACP by AcpS. This modification is essential for activity because fatty acids are bound in thioester linkage to the sulfhydryl of the prosthetic group.

Its subcellular location is the cytoplasm. It functions in the pathway lipid metabolism; fatty acid biosynthesis. Functionally, carrier of the growing fatty acid chain in fatty acid biosynthesis. In Thioalkalivibrio sulfidiphilus (strain HL-EbGR7), this protein is Acyl carrier protein.